Here is a 267-residue protein sequence, read N- to C-terminus: Trehalose 2-sulfotransferase (267 aa).

Residues Q14, 33 to 39 (EPQEFFQ), P48, and W53 contribute to the alpha,alpha-trehalose site. E36 acts as the Proton acceptor in catalysis.

Belongs to the Stf0 sulfotransferase family. Homodimer.

It carries out the reaction alpha,alpha-trehalose + 3'-phosphoadenylyl sulfate = 2-O-sulfo-alpha,alpha-trehalose + adenosine 3',5'-bisphosphate + H(+). It functions in the pathway glycolipid metabolism. Catalyzes the sulfuryl group transfer from 3'-phosphoadenosine-5'-phosphosulfate (PAPS) to trehalose, leading to trehalose-2-sulfate (T2S). The sulfation of trehalose is the first step in the biosynthesis of sulfolipid-1 (SL-1), a major cell wall glycolipid in pathogenic mycobacteria. Cannot use free glucose and unnatural stereoisomers of trehalose (alpha,beta (neo-trehalose) and beta,beta (iso-trehalose)) as substrates. The chain is Trehalose 2-sulfotransferase from Mycolicibacterium smegmatis (strain ATCC 700084 / mc(2)155) (Mycobacterium smegmatis).